The chain runs to 121 residues: Cell division protein FtsB (121 aa).

At 1-6 (MRNWRW) the chain is on the cytoplasmic side. The chain crosses the membrane as a helical span at residues 7 to 24 (LLLVLAVLLAWLQYRFWF). Topologically, residues 25–121 (GPGNSGEVMM…PEPIDPVDHP (97 aa)) are periplasmic. Residues 31–66 (EVMMLEAQVAHQTQDNEGLRQRNQALAAEVKDLKDG) adopt a coiled-coil conformation. The disordered stretch occupies residues 92 to 121 (EDAPLPAPASPEAPAPPQQAPEPIDPVDHP). Positions 96–115 (LPAPASPEAPAPPQQAPEPI) are enriched in pro residues.

This sequence belongs to the FtsB family. As to quaternary structure, part of a complex composed of FtsB, FtsL and FtsQ.

Its subcellular location is the cell inner membrane. In terms of biological role, essential cell division protein. May link together the upstream cell division proteins, which are predominantly cytoplasmic, with the downstream cell division proteins, which are predominantly periplasmic. This Xanthomonas euvesicatoria pv. vesicatoria (strain 85-10) (Xanthomonas campestris pv. vesicatoria) protein is Cell division protein FtsB.